The following is a 303-amino-acid chain: ATP-dependent Clp protease ATP-binding subunit CLPT3, chloroplastic (303 aa).

A chloroplast-targeting transit peptide spans 1–37 (MLLANAPHNGCSRLQQVTLLRASGAKLHRKRALTVVA). Disordered regions lie at residues 185–214 (ASTE…RDSD) and 278–303 (RDDN…DEYE).

The protein belongs to the ClpA/ClpB family.

The protein resides in the plastid. Its subcellular location is the chloroplast. Functionally, accessory protein regulating the assembly of the plastid Clp protease system. In Chlamydomonas reinhardtii (Chlamydomonas smithii), this protein is ATP-dependent Clp protease ATP-binding subunit CLPT3, chloroplastic.